Consider the following 962-residue polypeptide: Translation initiation factor IF-2 (962 aa).

3 disordered regions span residues 122-263, 293-327, and 341-362; these read EVGV…EPAR, TEEV…TRRK, and IAAQ…AKEP. The segment covering 156–173 has biased composition (low complexity); the sequence is AVEPQTVVPPVAAPAAEV. Positions 188 to 202 are enriched in basic and acidic residues; sequence KPPEEKETKVKHAEP. Residues 244 to 256 are compositionally biased toward basic residues; that stretch reads RPKKAKKRRRKKV. 2 stretches are compositionally biased toward basic and acidic residues: residues 308–327 and 344–362; these read RPEE…TRRK and QDDR…AKEP. In terms of domain architecture, tr-type G spans 455–624; that stretch reads RRPPVITVMG…LLQAELLELK (170 aa). Residues 464 to 471 form a G1 region; sequence GHVDHGKT. GTP is bound at residue 464 to 471; the sequence is GHVDHGKT. The G2 stretch occupies residues 489–493; it reads GITQH. A G3 region spans residues 510–513; the sequence is DTPG. GTP-binding positions include 510–514 and 564–567; these read DTPGH and NKVD. The segment at 564–567 is G4; the sequence is NKVD. Positions 600-602 are G5; that stretch reads SAK.

It belongs to the TRAFAC class translation factor GTPase superfamily. Classic translation factor GTPase family. IF-2 subfamily.

Its subcellular location is the cytoplasm. Its function is as follows. One of the essential components for the initiation of protein synthesis. Protects formylmethionyl-tRNA from spontaneous hydrolysis and promotes its binding to the 30S ribosomal subunits. Also involved in the hydrolysis of GTP during the formation of the 70S ribosomal complex. In Syntrophobacter fumaroxidans (strain DSM 10017 / MPOB), this protein is Translation initiation factor IF-2.